Consider the following 900-residue polypeptide: DNA mismatch repair protein MutS (900 aa).

Residues 1–88 (MPGPSDDPTE…PAWAHHSQVD (88 aa)) are disordered. Residues 56–68 (APADHNAADHDSN) show a composition bias toward basic and acidic residues. 714 to 721 (GPNASGKS) is an ATP binding site.

Belongs to the DNA mismatch repair MutS family.

Functionally, this protein is involved in the repair of mismatches in DNA. It is possible that it carries out the mismatch recognition step. This protein has a weak ATPase activity. This Parasynechococcus marenigrum (strain WH8102) protein is DNA mismatch repair protein MutS.